The following is a 174-amino-acid chain: uncharacterized protein (174 aa).

This is an uncharacterized protein from Homo sapiens (Human).